The chain runs to 342 residues: Platelet-activating factor receptor (342 aa).

The Extracellular portion of the chain corresponds to 1 to 16; the sequence is MEPNNSFRVDSEFRYT. The N-linked (GlcNAc...) asparagine glycan is linked to N4. The chain crosses the membrane as a helical span at residues 17–38; that stretch reads LFPIFYSIVFVLGVIANSYVLW. Over 39 to 54 the chain is Cytoplasmic; that stretch reads VFARLYPSKKFNEIKI. Residues 55 to 74 form a helical membrane-spanning segment; sequence FMVNLTMADLLFLVTLPLWI. The Extracellular portion of the chain corresponds to 75–91; that stretch reads VYYYNQGDWILPKFLCN. An intrachain disulfide couples C90 to C173. Residues 92–113 form a helical membrane-spanning segment; sequence LAGCFFFINTYCSVAFLAVITY. The Cytoplasmic segment spans residues 114–133; it reads NRFQAVTRPIKTAQATTRKR. The chain crosses the membrane as a helical span at residues 134-155; the sequence is GFLLSLIIWVSIVGAASYFFVL. Residues 156 to 184 lie on the Extracellular side of the membrane; it reads DSTNSEPKKTGSGNITRCFEHYEKGSIPV. N169 carries N-linked (GlcNAc...) asparagine glycosylation. Residues 185–205 form a helical membrane-spanning segment; it reads LIIHIFLVFSFFLVFLIILFC. The Cytoplasmic portion of the chain corresponds to 206-233; the sequence is NLVIIRTLLTQQVQMQRNAEVKRRALWM. The helical transmembrane segment at 234 to 254 threads the bilayer; the sequence is VCTVLAVFVICFVPHHLVQLP. The Extracellular portion of the chain corresponds to 255-276; sequence WTLAELGFQDTDFHQGINDAHQ. The chain crosses the membrane as a helical span at residues 277–296; sequence VTLCLLSTNCVLDPIIYCFL. Residues 297 to 342 are Cytoplasmic-facing; the sequence is TKKFRKHLTEKLYSMRESRKCSRATSETGTEVVVQLKDAPIKSLKY.

The protein belongs to the G-protein coupled receptor 1 family. As to quaternary structure, interacts with ARRB1.

It is found in the cell membrane. Functionally, receptor for platelet activating factor, a chemotactic phospholipid mediator that possesses potent inflammatory, smooth-muscle contractile and hypotensive activity. Seems to mediate its action via a G protein that activates a phosphatidylinositol-calcium second messenger system. The protein is Platelet-activating factor receptor of Capra hircus (Goat).